A 904-amino-acid chain; its full sequence is Protein translocase subunit SecA (904 aa).

ATP contacts are provided by residues Gln89, 107–111, and Asp496; that span reads GEGKT. Positions 870–904 are disordered; that stretch reads GGFQELSSGTPSPTVTVTTSSGGGTERKTSRRRKR. A compositionally biased stretch (low complexity) spans 876–889; that stretch reads SSGTPSPTVTVTTS.

This sequence belongs to the SecA family. Monomer and homodimer. Part of the essential Sec protein translocation apparatus which comprises SecA, SecYEG and auxiliary proteins SecDF. Other proteins may also be involved.

The protein localises to the cell inner membrane. The protein resides in the cytoplasm. It carries out the reaction ATP + H2O + cellular proteinSide 1 = ADP + phosphate + cellular proteinSide 2.. In terms of biological role, part of the Sec protein translocase complex. Interacts with the SecYEG preprotein conducting channel. Has a central role in coupling the hydrolysis of ATP to the transfer of proteins into and across the cell membrane, serving as an ATP-driven molecular motor driving the stepwise translocation of polypeptide chains across the membrane. The protein is Protein translocase subunit SecA of Leptospira borgpetersenii serovar Hardjo-bovis (strain L550).